We begin with the raw amino-acid sequence, 436 residues long: Kynureninase (436 aa).

Residues Leu-88, Thr-89, 116–119 (FPSD), Asp-202, His-205, and Tyr-227 contribute to the pyridoxal 5'-phosphate site. An N6-(pyridoxal phosphate)lysine modification is found at Lys-228. Residues Trp-280 and Asn-308 each coordinate pyridoxal 5'-phosphate.

This sequence belongs to the kynureninase family. In terms of assembly, homodimer. It depends on pyridoxal 5'-phosphate as a cofactor.

The protein resides in the cytoplasm. It catalyses the reaction L-kynurenine + H2O = anthranilate + L-alanine + H(+). It carries out the reaction 3-hydroxy-L-kynurenine + H2O = 3-hydroxyanthranilate + L-alanine + H(+). It functions in the pathway amino-acid degradation; L-kynurenine degradation; L-alanine and anthranilate from L-kynurenine: step 1/1. It participates in cofactor biosynthesis; NAD(+) biosynthesis; quinolinate from L-kynurenine: step 2/3. In terms of biological role, catalyzes the cleavage of L-kynurenine (L-Kyn) and L-3-hydroxykynurenine (L-3OHKyn) into anthranilic acid (AA) and 3-hydroxyanthranilic acid (3-OHAA), respectively. This is Kynureninase from Schistosoma japonicum (Blood fluke).